Here is a 256-residue protein sequence, read N- to C-terminus: Thiazole synthase (256 aa).

Lys98 (schiff-base intermediate with DXP) is an active-site residue. 1-deoxy-D-xylulose 5-phosphate-binding positions include Gly159, 185 to 186 (AG), and 207 to 208 (NT).

Belongs to the ThiG family. As to quaternary structure, homotetramer. Forms heterodimers with either ThiH or ThiS.

It is found in the cytoplasm. It catalyses the reaction [ThiS sulfur-carrier protein]-C-terminal-Gly-aminoethanethioate + 2-iminoacetate + 1-deoxy-D-xylulose 5-phosphate = [ThiS sulfur-carrier protein]-C-terminal Gly-Gly + 2-[(2R,5Z)-2-carboxy-4-methylthiazol-5(2H)-ylidene]ethyl phosphate + 2 H2O + H(+). It participates in cofactor biosynthesis; thiamine diphosphate biosynthesis. In terms of biological role, catalyzes the rearrangement of 1-deoxy-D-xylulose 5-phosphate (DXP) to produce the thiazole phosphate moiety of thiamine. Sulfur is provided by the thiocarboxylate moiety of the carrier protein ThiS. In vitro, sulfur can be provided by H(2)S. In Aliivibrio fischeri (strain ATCC 700601 / ES114) (Vibrio fischeri), this protein is Thiazole synthase.